Here is a 107-residue protein sequence, read N- to C-terminus: Serine-rich and transmembrane domain-containing protein 1 (107 aa).

A helical membrane pass occupies residues 43 to 63 (IYVSIFLSLLAFLLLLLIIAL).

It localises to the membrane. In Mus musculus (Mouse), this protein is Serine-rich and transmembrane domain-containing protein 1 (Sertm1).